We begin with the raw amino-acid sequence, 204 residues long: uncharacterized protein (204 aa).

The first 16 residues, 1–16, serve as a signal peptide directing secretion; that stretch reads MKYTFLAVLSAVTVLA.

It is found in the secreted. This is an uncharacterized protein from Arthroderma benhamiae (strain ATCC MYA-4681 / CBS 112371) (Trichophyton mentagrophytes).